The primary structure comprises 196 residues: dTTP/UTP pyrophosphatase (196 aa).

The Proton acceptor role is filled by Asp77.

This sequence belongs to the Maf family. YhdE subfamily. A divalent metal cation serves as cofactor.

It localises to the cytoplasm. The catalysed reaction is dTTP + H2O = dTMP + diphosphate + H(+). It catalyses the reaction UTP + H2O = UMP + diphosphate + H(+). Its function is as follows. Nucleoside triphosphate pyrophosphatase that hydrolyzes dTTP and UTP. May have a dual role in cell division arrest and in preventing the incorporation of modified nucleotides into cellular nucleic acids. In Christiangramia forsetii (strain DSM 17595 / CGMCC 1.15422 / KT0803) (Gramella forsetii), this protein is dTTP/UTP pyrophosphatase.